Consider the following 277-residue polypeptide: Carbonyl reductase [NADPH] 1 (277 aa).

Residue S2 is modified to N-acetylserine. Phosphoserine is present on residues S2 and S30. NADP(+) contacts are provided by residues V10 to V34, D63 to I64, and N90. Glutathione is bound by residues F95–V97 and Q106. S140 lines the substrate pocket. A glutathione-binding site is contributed by A193–Y194. Residue Y194 is the Proton acceptor of the active site. Residues Y194–K198 and V231–T233 each bind NADP(+). N6-1-carboxyethyl lysine is present on K239.

This sequence belongs to the short-chain dehydrogenases/reductases (SDR) family. In terms of assembly, monomer. As to expression, expressed in kidney (at protein level).

The protein resides in the cytoplasm. The enzyme catalyses a secondary alcohol + NADP(+) = a ketone + NADPH + H(+). It carries out the reaction a primary alcohol + NADP(+) = an aldehyde + NADPH + H(+). It catalyses the reaction prostaglandin F2alpha + NADP(+) = prostaglandin E2 + NADPH + H(+). The catalysed reaction is prostaglandin E1 + NADP(+) = 15-oxoprostaglandin E1 + NADPH + H(+). The enzyme catalyses menadione + NADPH + H(+) = menadiol + NADP(+). It carries out the reaction prostaglandin D2 + NADP(+) = 15-oxoprostaglandin D2 + NADPH + H(+). It catalyses the reaction prostaglandin E2 + NADP(+) = 15-oxoprostaglandin E2 + NADPH + H(+). The catalysed reaction is prostaglandin F2alpha + NADP(+) = 15-oxoprostaglandin F2alpha + NADPH + H(+). The enzyme catalyses daunorubicin + NADPH + H(+) = 13-dihydrodaunorubicin + NADP(+). It carries out the reaction S-nitrosoglutathione + NADPH + H(+) = S-(hydroxysulfenamide)glutathione + NADP(+). It catalyses the reaction cortisol + NADPH + H(+) = 20beta-dihydrocortisol + NADP(+). The catalysed reaction is corticosterone + NADPH + H(+) = 20beta-dihydrocorticosterone + NADP(+). Its activity is regulated as follows. Inhibited by quercetin, rutenin and its derivatives. NADPH-dependent reductase with broad substrate specificity. Catalyzes the reduction of a wide variety of carbonyl compounds including quinones, prostaglandins, menadione, plus various xenobiotics. Catalyzes the reduction of the antitumor anthracyclines doxorubicin and daunorubicin to the cardiotoxic compounds doxorubicinol and daunorubicinol. Can convert prostaglandin E to prostaglandin F2-alpha. Can bind glutathione, which explains its higher affinity for glutathione-conjugated substrates. Catalyzes the reduction of S-nitrosoglutathione. In addition, participates in the glucocorticoid metabolism by catalyzing the NADPH-dependent cortisol/corticosterone into 20beta-dihydrocortisol (20b-DHF) or 20beta-corticosterone (20b-DHB), which are weak agonists of NR3C1 and NR3C2 in adipose tissue. The polypeptide is Carbonyl reductase [NADPH] 1 (Homo sapiens (Human)).